A 255-amino-acid polypeptide reads, in one-letter code: Chlorocatechol 1,2-dioxygenase (255 aa).

Residues Tyr-130, Tyr-164, His-188, and His-190 each contribute to the Fe cation site.

This sequence belongs to the intradiol ring-cleavage dioxygenase family. It depends on Fe(3+) as a cofactor.

It carries out the reaction 3,5-dichlorocatechol + O2 = (2E,4E)-2,4-dichloromuconate + 2 H(+). The protein operates within aromatic compound metabolism; 3-chlorocatechol degradation. In terms of biological role, preferentially converts 3,5-dichlorocatechol as opposed to other chlorinated catechols. Retains diminished activity toward non-chlorinated substrates. This Burkholderia cepacia (Pseudomonas cepacia) protein is Chlorocatechol 1,2-dioxygenase (tfdC).